The sequence spans 975 residues: Chromosome transmission fidelity protein 18 homolog (975 aa).

Disordered regions lie at residues 30 to 83 (EGAS…KRQV) and 114 to 141 (SEEM…DLAE). Phosphothreonine is present on T51. Low complexity predominate over residues 58–77 (RGDAASSPAPAASVGSSQGG). S64 is modified (phosphoserine). Positions 122 to 136 (PPDSSPTDITPPPSP) are enriched in pro residues. The residue at position 225 (S225) is a Phosphoserine. 2 disordered regions span residues 246–276 (SDTL…GQDA) and 320–346 (RPSR…KWKS). 374 to 381 (GPPGLGKT) contributes to the ATP binding site. The segment at 858-896 (ASARVENSPQVDGSPPGLEGLLGGIGEKGVHRPAPRNHE) is disordered. S871 is subject to Phosphoserine.

The protein belongs to the activator 1 small subunits family. CTF18 subfamily. Component of the CTF18-RFC complex, which consists of CTF18, CTF8, DCC1, RFC2, RFC3, RFC4 and RFC5. During assembly of the CTF18-RFC complex, CTF18 may first assemble into a subcomplex with RFC2, RFC3, RFC4 and RFC5. CTF18 then interacts directly with CTF8, which in turn interacts with DCC1. The CTF18-RFC complex associates with PCNA and with DNA polymerase POLH. The CTF18-RFC complex does not interact with the Rad9/Rad1/Hus1 complex. CTF18 interacts with SMC1A and RAD21. Interacts with DDX11.

It localises to the nucleus. Functionally, chromosome cohesion factor involved in sister chromatid cohesion and fidelity of chromosome transmission. Component of one of the cell nuclear antigen loader complexes, CTF18-replication factor C (CTF18-RFC), which consists of CTF18, CTF8, DCC1, RFC2, RFC3, RFC4 and RFC5. The CTF18-RFC complex binds to single-stranded and primed DNAs and has weak ATPase activity that is stimulated by the presence of primed DNA, replication protein A (RPA) and by proliferating cell nuclear antigen (PCNA). The CTF18-RFC complex catalyzes the ATP-dependent loading of PCNA onto primed and gapped DNA. Interacts with and stimulates DNA polymerase POLH. During DNA repair synthesis, involved in loading DNA polymerase POLE at the sites of local damage. This is Chromosome transmission fidelity protein 18 homolog (CHTF18) from Homo sapiens (Human).